The chain runs to 220 residues: Large ribosomal subunit protein uL1 (220 aa).

Belongs to the universal ribosomal protein uL1 family. In terms of assembly, part of the 50S ribosomal subunit.

Its function is as follows. Binds directly to 23S rRNA. The L1 stalk is quite mobile in the ribosome, and is involved in E site tRNA release. Protein L1 is also a translational repressor protein, it controls the translation of the L11 operon by binding to its mRNA. This is Large ribosomal subunit protein uL1 from Ehrlichia ruminantium (strain Gardel).